We begin with the raw amino-acid sequence, 217 residues long: MSPVRPRYFTPREVSRHCVLSDLWVSYLGRVYDLTPLLEQHKGDVLLKPIIAAGGRDISHWFNPKTGDVKTHIDPQTGCLKYYTPQGRFLHIAPCFPCSGWDNDFGRPWWKDTIYQVGILSSKTRFIRIINTLTSQEQMLEVCSEETIWEILQRYLAYNAHAASYTWKFCGVPLDMDKTLQENGVQDEDLEFEELKIDADLYTPSIHLYFNDDLTEL.

Positions 6 to 72 (PRYFTPREVS…NPKTGDVKTH (67 aa)) constitute a Cytochrome b5 heme-binding domain. Heme is bound by residues histidine 41 and histidine 72.

It belongs to the cytochrome b5 family.

Its subcellular location is the cytoplasm. The protein resides in the cytoskeleton. It is found in the cilium axoneme. Radial spoke stalk protein that binds heme under oxidizing conditions. Required for the coordinated beating of multiple cilia maybe by functioning in a redox signaling pathway. The polypeptide is Cytochrome b5 domain-containing protein 1 (cyb5d1) (Xenopus laevis (African clawed frog)).